A 486-amino-acid polypeptide reads, in one-letter code: 2-succinylbenzoate--CoA ligase (486 aa).

This sequence belongs to the ATP-dependent AMP-binding enzyme family. MenE subfamily.

It catalyses the reaction 2-succinylbenzoate + ATP + CoA = 2-succinylbenzoyl-CoA + AMP + diphosphate. Its pathway is quinol/quinone metabolism; 1,4-dihydroxy-2-naphthoate biosynthesis; 1,4-dihydroxy-2-naphthoate from chorismate: step 5/7. The protein operates within quinol/quinone metabolism; menaquinone biosynthesis. Converts 2-succinylbenzoate (OSB) to 2-succinylbenzoyl-CoA (OSB-CoA). The sequence is that of 2-succinylbenzoate--CoA ligase from Bacillus pumilus (strain SAFR-032).